A 276-amino-acid polypeptide reads, in one-letter code: Extracellular metalloprotease VDBG_07883 (276 aa).

The signal sequence occupies residues 1-17; it reads MQSKFLWIAAASAATAA. 2 N-linked (GlcNAc...) asparagine glycosylation sites follow: asparagine 70 and asparagine 102. Zn(2+) is bound at residue histidine 191. Glutamate 192 is an active-site residue. Residue histidine 195 participates in Zn(2+) binding. Asparagine 222 carries an N-linked (GlcNAc...) asparagine glycan. Residues cysteine 227 and cysteine 254 are joined by a disulfide bond.

The protein belongs to the peptidase M43B family.

The protein resides in the secreted. Secreted metalloproteinase that allows assimilation of proteinaceous substrates. In Verticillium alfalfae (strain VaMs.102 / ATCC MYA-4576 / FGSC 10136) (Verticillium wilt of alfalfa), this protein is Extracellular metalloprotease VDBG_07883.